Reading from the N-terminus, the 101-residue chain is Histone H1-like protein EM6 (101 aa).

Basic residues-rich tracts occupy residues 1–35 (AKKR…HVRK) and 58–101 (AKKK…RRRR). Positions 1-101 (AKKRSRSRKR…SRTARSRRRR (101 aa)) are disordered. A run of 4 repeats spans residues 3 to 4 (KR), 5 to 6 (SR), 7 to 8 (SR), and 9 to 10 (KR). Residues 3-22 (KRSRSRKRSASRKRSRSRKR) are 10 X 2 AA approximate tandem repeats of [SK]-R. A 5; approximate repeat occupies 11–12 (SA). 5 repeat units span residues 13–14 (SR), 15–16 (KR), 17–18 (SR), 19–20 (SR), and 21–22 (KR). The globular stretch occupies residues 32 to 65 (HVRKALAAGMKNHLLAHPKGSNNFILAKKKAPRR).

Sperm.

The protein resides in the nucleus. The protein localises to the chromosome. This is Histone H1-like protein EM6 from Ensis minor (Razor shell).